A 180-amino-acid chain; its full sequence is NADH-quinone oxidoreductase subunit I (180 aa).

4Fe-4S ferredoxin-type domains are found at residues 48–80 (IVLTRDPDGQERCVACNLCAVACPVGCISLQKA) and 90–119 (EFFRINFSRCIFCGMCEEACPTTAIQLTPD). 8 residues coordinate [4Fe-4S] cluster: Cys60, Cys63, Cys66, Cys70, Cys99, Cys102, Cys105, and Cys109.

Belongs to the complex I 23 kDa subunit family. NDH-1 is composed of 13 different subunits. Subunits NuoA, H, J, K, L, M, N constitute the membrane sector of the complex. It depends on [4Fe-4S] cluster as a cofactor.

Its subcellular location is the cell inner membrane. The enzyme catalyses a quinone + NADH + 5 H(+)(in) = a quinol + NAD(+) + 4 H(+)(out). Its function is as follows. NDH-1 shuttles electrons from NADH, via FMN and iron-sulfur (Fe-S) centers, to quinones in the respiratory chain. The immediate electron acceptor for the enzyme in this species is believed to be ubiquinone. Couples the redox reaction to proton translocation (for every two electrons transferred, four hydrogen ions are translocated across the cytoplasmic membrane), and thus conserves the redox energy in a proton gradient. The sequence is that of NADH-quinone oxidoreductase subunit I from Cronobacter sakazakii (strain ATCC BAA-894) (Enterobacter sakazakii).